The following is a 504-amino-acid chain: Glucose-6-phosphate isomerase (504 aa).

Glu333 acts as the Proton donor in catalysis. Catalysis depends on residues His364 and Lys473.

Belongs to the GPI family.

It is found in the cytoplasm. It catalyses the reaction alpha-D-glucose 6-phosphate = beta-D-fructose 6-phosphate. It functions in the pathway carbohydrate biosynthesis; gluconeogenesis. The protein operates within carbohydrate degradation; glycolysis; D-glyceraldehyde 3-phosphate and glycerone phosphate from D-glucose: step 2/4. Its function is as follows. Catalyzes the reversible isomerization of glucose-6-phosphate to fructose-6-phosphate. The polypeptide is Glucose-6-phosphate isomerase (Xanthomonas euvesicatoria pv. vesicatoria (strain 85-10) (Xanthomonas campestris pv. vesicatoria)).